Consider the following 667-residue polypeptide: 1-deoxy-D-xylulose-5-phosphate synthase (667 aa).

Residues His73 and 113–115 contribute to the thiamine diphosphate site; that span reads SHA. Position 145 (Asp145) interacts with Mg(2+). Thiamine diphosphate contacts are provided by residues 146–147, Asn175, Tyr297, and Glu379; that span reads GA. Asn175 contributes to the Mg(2+) binding site.

It belongs to the transketolase family. DXPS subfamily. In terms of assembly, homodimer. It depends on Mg(2+) as a cofactor. Thiamine diphosphate is required as a cofactor.

The catalysed reaction is D-glyceraldehyde 3-phosphate + pyruvate + H(+) = 1-deoxy-D-xylulose 5-phosphate + CO2. It functions in the pathway metabolic intermediate biosynthesis; 1-deoxy-D-xylulose 5-phosphate biosynthesis; 1-deoxy-D-xylulose 5-phosphate from D-glyceraldehyde 3-phosphate and pyruvate: step 1/1. Functionally, catalyzes the acyloin condensation reaction between C atoms 2 and 3 of pyruvate and glyceraldehyde 3-phosphate to yield 1-deoxy-D-xylulose-5-phosphate (DXP). The polypeptide is 1-deoxy-D-xylulose-5-phosphate synthase (Kocuria rhizophila (strain ATCC 9341 / DSM 348 / NBRC 103217 / DC2201)).